A 123-amino-acid polypeptide reads, in one-letter code: Large ribosomal subunit protein bL17 (123 aa).

The protein belongs to the bacterial ribosomal protein bL17 family. As to quaternary structure, part of the 50S ribosomal subunit. Contacts protein L32.

This Borreliella burgdorferi (strain ZS7) (Borrelia burgdorferi) protein is Large ribosomal subunit protein bL17.